The primary structure comprises 442 residues: MNRLRRKACVALLLFTLFIFGTMMGLRTLKPTDGFSDLAPGMELMPLVGERMEQRPNHLIESAGQNGGLHSDTKIVFSNSGPDHSIFYDIHIFYYLWYGSPQMDSSYIHWDHVLVPHWDPKIAASHPKGRHNPPDDIASSYYPELGPYSSRDPEVIESHMAQIEAAAAGVVVLSWYPPGVADEHGKPSEDLVPAVMDAAHKHSIKVAFHLQPYKGRTDISVHDNIKYIIDTYGTHGAFYRFKSSTGKILPLFYVYDSYLTPPETWAELLTIRGSHSLRGTPYDGIFIALIVEERHKQDILAGGFDGMYTYFASNGFSFGSSHQNWKAIKAFCDKNNLLFVPSAGPGYMDTAVRPWNNHNTRNRVNGRYYETSLQAAMSVRPDIITITSFNEWHEGTQIERAVPKKTVARLYLDYKPHQPDHYLELTKKWAEHFSKEKEQWLM.

The Cytoplasmic portion of the chain corresponds to 1 to 8 (MNRLRRKA). A helical; Signal-anchor for type II membrane protein membrane pass occupies residues 9-29 (CVALLLFTLFIFGTMMGLRTL). Residues 30-442 (KPTDGFSDLA…FSKEKEQWLM (413 aa)) lie on the Lumenal side of the membrane.

Belongs to the glycosyl hydrolase 99 family.

Its subcellular location is the golgi apparatus membrane. The polypeptide is Glycoprotein endo-alpha-1,2-mannosidase-like protein (maneal) (Danio rerio (Zebrafish)).